A 95-amino-acid chain; its full sequence is Co-chaperonin GroES (95 aa).

This sequence belongs to the GroES chaperonin family. Heptamer of 7 subunits arranged in a ring. Interacts with the chaperonin GroEL.

Its subcellular location is the cytoplasm. Together with the chaperonin GroEL, plays an essential role in assisting protein folding. The GroEL-GroES system forms a nano-cage that allows encapsulation of the non-native substrate proteins and provides a physical environment optimized to promote and accelerate protein folding. GroES binds to the apical surface of the GroEL ring, thereby capping the opening of the GroEL channel. The polypeptide is Co-chaperonin GroES (Xanthomonas axonopodis pv. citri (strain 306)).